The primary structure comprises 89 residues: MISLMEARNLRKERTGVVLSNKMEKTITVAAKFKEKHPIYGKFVSKTKKYHAHDEKNECNIGDTVRIMETRPLSKTKRWRLVEIIERAK.

This sequence belongs to the universal ribosomal protein uS17 family. Part of the 30S ribosomal subunit.

Its function is as follows. One of the primary rRNA binding proteins, it binds specifically to the 5'-end of 16S ribosomal RNA. The polypeptide is Small ribosomal subunit protein uS17A (Bacteroides thetaiotaomicron (strain ATCC 29148 / DSM 2079 / JCM 5827 / CCUG 10774 / NCTC 10582 / VPI-5482 / E50)).